The chain runs to 299 residues: Glycine--tRNA ligase alpha subunit (299 aa).

The protein belongs to the class-II aminoacyl-tRNA synthetase family. As to quaternary structure, tetramer of two alpha and two beta subunits.

It localises to the cytoplasm. The enzyme catalyses tRNA(Gly) + glycine + ATP = glycyl-tRNA(Gly) + AMP + diphosphate. The sequence is that of Glycine--tRNA ligase alpha subunit from Caulobacter vibrioides (strain ATCC 19089 / CIP 103742 / CB 15) (Caulobacter crescentus).